A 363-amino-acid chain; its full sequence is Early boundary activity protein 1 (363 aa).

A compositionally biased stretch (basic and acidic residues) spans 155-168 (MDQEPEHKQSHEQD). A disordered region spans residues 155-242 (MDQEPEHKQS…NAKRRCPGFE (88 aa)). Over residues 198–209 (EDLGLDDDDEDY) the composition is skewed to acidic residues. Residues 255-354 (GPNGTEVSRI…TKCADENKML (100 aa)) form the BEN domain.

The heterotrimeric Elba complex consists of Elba1, Elba2 and Elba3.

The protein localises to the nucleus. In terms of biological role, the heterotrimeric Elba complex is required for chromatin domain boundary function during early embryogenesis. It binds to a 8-bp sequence 5'-CCAATAAG-3' in the Fab-7 insulator or boundary element in the bithorax complex and contributes to its insulator or boundary activity. Elba1 may act as a transcriptional repressor and binds the palindromic sequence 5'-CCAATTGG-3' to mediate transcriptional repression. The chain is Early boundary activity protein 1 from Drosophila melanogaster (Fruit fly).